A 394-amino-acid polypeptide reads, in one-letter code: ATP phosphoribosyltransferase regulatory subunit (394 aa).

It belongs to the class-II aminoacyl-tRNA synthetase family. HisZ subfamily. In terms of assembly, heteromultimer composed of HisG and HisZ subunits.

Its subcellular location is the cytoplasm. Its pathway is amino-acid biosynthesis; L-histidine biosynthesis; L-histidine from 5-phospho-alpha-D-ribose 1-diphosphate: step 1/9. In terms of biological role, required for the first step of histidine biosynthesis. May allow the feedback regulation of ATP phosphoribosyltransferase activity by histidine. This chain is ATP phosphoribosyltransferase regulatory subunit, found in Geobacillus kaustophilus (strain HTA426).